The chain runs to 303 residues: MQKFDTRTFQGLILTLQDYWARQGCTIVQPLDMEVGAGTSHPMTCLRALGPEPMAAAYVQPSRRPTDGRYGENPNRLQHYYQFQVVIKPSPDNIQELYLGSLKELGMDPTIHDIRFVEDNWENPTLGAWGLGWEVWLNGMEVTQFTYFQQVGGLECKPVTGEITYGLERLAMYIQGVDSVYDLVWSDGPLGKTTYGDVFHQNEVEQSTYNFEYADVDFLFTCFEQYEKEAQQLLALENPLPLPAYERILKAAHSFNLLDARKAISVTERQRYILRIRTLTKAVAEAYYASREALGFPMCNKDK.

Belongs to the class-II aminoacyl-tRNA synthetase family. As to quaternary structure, tetramer of two alpha and two beta subunits.

The protein localises to the cytoplasm. The catalysed reaction is tRNA(Gly) + glycine + ATP = glycyl-tRNA(Gly) + AMP + diphosphate. In Escherichia fergusonii (strain ATCC 35469 / DSM 13698 / CCUG 18766 / IAM 14443 / JCM 21226 / LMG 7866 / NBRC 102419 / NCTC 12128 / CDC 0568-73), this protein is Glycine--tRNA ligase alpha subunit.